The sequence spans 519 residues: ATP synthase subunit alpha 1 (519 aa).

172 to 179 (GDRQTGKT) lines the ATP pocket.

It belongs to the ATPase alpha/beta chains family. In terms of assembly, F-type ATPases have 2 components, CF(1) - the catalytic core - and CF(0) - the membrane proton channel. CF(1) has five subunits: alpha(3), beta(3), gamma(1), delta(1), epsilon(1). CF(0) has three main subunits: a(1), b(2) and c(9-12). The alpha and beta chains form an alternating ring which encloses part of the gamma chain. CF(1) is attached to CF(0) by a central stalk formed by the gamma and epsilon chains, while a peripheral stalk is formed by the delta and b chains.

Its subcellular location is the cell inner membrane. It catalyses the reaction ATP + H2O + 4 H(+)(in) = ADP + phosphate + 5 H(+)(out). Functionally, produces ATP from ADP in the presence of a proton gradient across the membrane. The alpha chain is a regulatory subunit. The sequence is that of ATP synthase subunit alpha 1 from Psychromonas ingrahamii (strain DSM 17664 / CCUG 51855 / 37).